The primary structure comprises 111 residues: MMENKNLKFIQNAIKKNKVVLFMKGTKEMPACGFSGTVVAILNKLGVEFSDINVLFDTSLREDLKKFSDWPTFPQLYINGELVGGCDIVKELYQNGELEKMLKDETKLIKN.

One can recognise a Glutaredoxin domain in the interval 7–109 (LKFIQNAIKK…KMLKDETKLI (103 aa)). Lys24 serves as a coordination point for glutathione. Residue Cys32 coordinates [2Fe-2S] cluster. Residues Arg61, Phe73, and 86–87 (CD) contribute to the glutathione site.

This sequence belongs to the glutaredoxin family. Monothiol subfamily.

This is Probable monothiol glutaredoxin 2 (grxC2) from Rickettsia typhi (strain ATCC VR-144 / Wilmington).